A 249-amino-acid polypeptide reads, in one-letter code: 2,3,4,5-tetrahydropyridine-2,6-dicarboxylate N-acetyltransferase (249 aa).

This sequence belongs to the transferase hexapeptide repeat family. DapH subfamily.

The enzyme catalyses (S)-2,3,4,5-tetrahydrodipicolinate + acetyl-CoA + H2O = L-2-acetamido-6-oxoheptanedioate + CoA. It functions in the pathway amino-acid biosynthesis; L-lysine biosynthesis via DAP pathway; LL-2,6-diaminopimelate from (S)-tetrahydrodipicolinate (acetylase route): step 1/3. Catalyzes the transfer of an acetyl group from acetyl-CoA to tetrahydrodipicolinate. This is 2,3,4,5-tetrahydropyridine-2,6-dicarboxylate N-acetyltransferase from Fervidobacterium nodosum (strain ATCC 35602 / DSM 5306 / Rt17-B1).